Consider the following 433-residue polypeptide: Trigger factor (433 aa).

In terms of domain architecture, PPIase FKBP-type spans 166 to 251; sequence GDFAVIDFEG…LHEIQERAKP (86 aa).

This sequence belongs to the FKBP-type PPIase family. Tig subfamily.

The protein resides in the cytoplasm. The catalysed reaction is [protein]-peptidylproline (omega=180) = [protein]-peptidylproline (omega=0). Functionally, involved in protein export. Acts as a chaperone by maintaining the newly synthesized protein in an open conformation. Functions as a peptidyl-prolyl cis-trans isomerase. This is Trigger factor from Aliarcobacter butzleri (strain RM4018) (Arcobacter butzleri).